Reading from the N-terminus, the 129-residue chain is Acetophenone carboxylase beta subunit (129 aa).

Acetophenone carboxylase consists of five subunits; a heterooctameric subcomplex of two alpha (Apc1), two beta (Apc2), two gamma (Apc3) and two delta (Apc4) subunits assembles with the epsilon (Apc5) subunit in an unknown stoichiometry. It depends on Mg(2+) as a cofactor. Mn(2+) serves as cofactor.

It is found in the cytoplasm. The enzyme catalyses acetophenone + hydrogencarbonate + 2 ATP + H2O = 3-oxo-3-phenylpropanoate + 2 ADP + 2 phosphate + 2 H(+). Its activity is regulated as follows. Inhibited by zinc ions, carbamoylphosphate and beta,gamma-imido-ATP. In terms of biological role, catalyzes the carboxylation of acetophenone to form 3-oxo-3-phenylpropanoate (benzoylacetate) in the anaerobic catabolism of ethylbenzene. Also carboxylates propiophenone at the same rate and 4-acetyl-pyridine at lower rates. This Aromatoleum aromaticum (strain DSM 19018 / LMG 30748 / EbN1) (Azoarcus sp. (strain EbN1)) protein is Acetophenone carboxylase beta subunit (apc2).